Here is a 389-residue protein sequence, read N- to C-terminus: tRNA-specific 2-thiouridylase MnmA (389 aa).

ATP contacts are provided by residues 34 to 41 and Leu60; that span reads AMSGGVDS. Cys128 serves as the catalytic Nucleophile. An intrachain disulfide couples Cys128 to Cys225. Gly152 serves as a coordination point for ATP. An interaction with tRNA region spans residues 174–176; that stretch reads RDQ. Cys225 functions as the Cysteine persulfide intermediate in the catalytic mechanism.

It belongs to the MnmA/TRMU family.

It localises to the cytoplasm. The catalysed reaction is S-sulfanyl-L-cysteinyl-[protein] + uridine(34) in tRNA + AH2 + ATP = 2-thiouridine(34) in tRNA + L-cysteinyl-[protein] + A + AMP + diphosphate + H(+). Its function is as follows. Catalyzes the 2-thiolation of uridine at the wobble position (U34) of tRNA, leading to the formation of s(2)U34. This chain is tRNA-specific 2-thiouridylase MnmA, found in Paracoccus denitrificans (strain Pd 1222).